The primary structure comprises 120 residues: Large ribosomal subunit protein uL18 (120 aa).

It belongs to the universal ribosomal protein uL18 family. As to quaternary structure, part of the 50S ribosomal subunit; part of the 5S rRNA/L5/L18/L25 subcomplex. Contacts the 5S and 23S rRNAs.

Its function is as follows. This is one of the proteins that bind and probably mediate the attachment of the 5S RNA into the large ribosomal subunit, where it forms part of the central protuberance. This Xanthobacter autotrophicus (strain ATCC BAA-1158 / Py2) protein is Large ribosomal subunit protein uL18.